A 40-amino-acid polypeptide reads, in one-letter code: Ferredoxin-2 (40 aa).

In terms of domain architecture, 2Fe-2S ferredoxin-type spans 3-40; sequence YNIKLITPEGTKEITCSDSEYILDAAEEKGLDLPYSCR. Position 39 (Cys39) interacts with [2Fe-2S] cluster.

This sequence belongs to the 2Fe2S plant-type ferredoxin family. [2Fe-2S] cluster serves as cofactor.

The protein localises to the plastid. It localises to the chloroplast. Ferredoxins are iron-sulfur proteins that transfer electrons in a wide variety of metabolic reactions. The sequence is that of Ferredoxin-2 from Pisum sativum (Garden pea).